The chain runs to 180 residues: UPF0690 protein C1orf52 homolog (180 aa).

Disordered regions lie at residues 1-66 (MAAE…SVTR) and 96-180 (KIWK…KKKK). Over residues 48–61 (KQAEKRLPGPDELF) the composition is skewed to basic and acidic residues. Residue threonine 65 is modified to Phosphothreonine. The residue at position 130 (tyrosine 130) is a Phosphotyrosine. A compositionally biased stretch (acidic residues) spans 149 to 160 (EGEETVESDDDK). Serine 156 is subject to Phosphoserine. Residues 161 to 180 (DERASKIRRVEPGEAAKKKK) show a composition bias toward basic and acidic residues.

It belongs to the UPF0690 family.

The chain is UPF0690 protein C1orf52 homolog from Mus musculus (Mouse).